Here is a 499-residue protein sequence, read N- to C-terminus: Putative sperm motility kinase W (499 aa).

The 249-residue stretch at 14–262 folds into the Protein kinase domain; it reads YKVLFTLGHG…IEDIERHPWV (249 aa). Residues 20–28 and K43 contribute to the ATP site; that span reads LGHGSFGTV. The Proton acceptor role is filled by D133. Residues 274–314 form the UBA domain; sequence DPDYNIIEMLCGMGFDANEILESLQRKKYNESMGAYLILKA.

This sequence belongs to the protein kinase superfamily. CAMK Ser/Thr protein kinase family. Smok subfamily.

The enzyme catalyses L-seryl-[protein] + ATP = O-phospho-L-seryl-[protein] + ADP + H(+). It carries out the reaction L-threonyl-[protein] + ATP = O-phospho-L-threonyl-[protein] + ADP + H(+). Its function is as follows. May play a role in sperm motility, especially in the regulation of flagellar function. This is Putative sperm motility kinase W from Mus musculus (Mouse).